Here is a 422-residue protein sequence, read N- to C-terminus: Probable Na(+)/H(+) antiporter 2 (422 aa).

13 consecutive transmembrane segments (helical) span residues 3 to 23 (IVLF…IAKI), 28 to 48 (GIPD…LNVI), 52 to 72 (IVES…LFIG), 93 to 113 (ILAL…VFHL), 119 to 139 (IGLL…IPIF), 157 to 177 (VFND…LGLA), 183 to 203 (ILEF…AGKF), 216 to 236 (YIAP…EGIF), 242 to 262 (YEIS…NVIV), 281 to 301 (LSIF…SIPL), 307 to 327 (LPAF…GVLI), 341 to 361 (IYLA…AMVY), and 384 to 404 (LAGT…VLEA).

It belongs to the monovalent cation:proton antiporter 1 (CPA1) transporter (TC 2.A.36) family.

The protein localises to the cell membrane. Its function is as follows. This is probably a Na(+)/H(+) antiporter. The polypeptide is Probable Na(+)/H(+) antiporter 2 (Methanocaldococcus jannaschii (strain ATCC 43067 / DSM 2661 / JAL-1 / JCM 10045 / NBRC 100440) (Methanococcus jannaschii)).